Here is a 326-residue protein sequence, read N- to C-terminus: tRNA uridine(34) hydroxylase (326 aa).

The Rhodanese domain occupies 123–217 (ADPEVFVVDT…YLEEVPEEES (95 aa)). The active-site Cysteine persulfide intermediate is cysteine 177. The segment at 293–326 (AVRGEQHVGGESAKQRQQRRAEKLAKKDVQRKQA) is disordered. Residues 311–326 (RRAEKLAKKDVQRKQA) are compositionally biased toward basic and acidic residues.

This sequence belongs to the TrhO family.

It catalyses the reaction uridine(34) in tRNA + AH2 + O2 = 5-hydroxyuridine(34) in tRNA + A + H2O. Functionally, catalyzes oxygen-dependent 5-hydroxyuridine (ho5U) modification at position 34 in tRNAs. The sequence is that of tRNA uridine(34) hydroxylase from Vibrio campbellii (strain ATCC BAA-1116).